Consider the following 491-residue polypeptide: Keratin, type I cytoskeletal 24 (491 aa).

Positions 1-23 are disordered; sequence MFCSAQKGSCSSRVSSSGAVGSR. A head region spans residues 1–117; sequence MFCSAQKGSC…GYDGGLLSGS (117 aa). The span at 8–23 shows a compositional bias: low complexity; it reads GSCSSRVSSSGAVGSR. Residues 118–153 are coil 1A; that stretch reads EKQTMQGLNDRLANYLDKVRALEEANTDLETKIKDW. The IF rod domain maps to 118 to 432; that stretch reads EKQTMQGLND…RLLNGDGGGC (315 aa). Residues 154–174 are linker 1; that stretch reads YGRHGSGKDGPGRDYSQYCSV. Residues 175 to 266 form a coil 1B region; that stretch reads IEDLKNQIIS…KNHEEEMKCL (92 aa). Residues 267–289 form a linker 12 region; sequence QGSSGGDVTVEMNATPGTDLTKL. The tract at residues 290–428 is coil 2; the sequence is LNDMRAQYEA…ETYRRLLNGD (139 aa). Residues 429-491 form a tail region; that stretch reads GGGCDYRNLV…VSNISEVKIK (63 aa).

The protein belongs to the intermediate filament family. Heterotetramer of two type I and two type II keratins.

This chain is Keratin, type I cytoskeletal 24 (Krt24), found in Rattus norvegicus (Rat).